Here is a 140-residue protein sequence, read N- to C-terminus: Large-conductance mechanosensitive channel (140 aa).

3 helical membrane-spanning segments follow: residues 14 to 34, 37 to 57, and 66 to 86; these read VLDLAVGVIIGGAFTSIVKSL, YLINPLIGLFIGGIDFSDWVL, and FGSFINAVINFLIIAFVVFIL.

The protein belongs to the MscL family. In terms of assembly, homopentamer.

It is found in the cell membrane. In terms of biological role, channel that opens in response to stretch forces in the membrane lipid bilayer. May participate in the regulation of osmotic pressure changes within the cell. This is Large-conductance mechanosensitive channel from Pediococcus pentosaceus (strain ATCC 25745 / CCUG 21536 / LMG 10740 / 183-1w).